The sequence spans 364 residues: Alanine racemase (364 aa).

Catalysis depends on lysine 34, which acts as the Proton acceptor; specific for D-alanine. An N6-(pyridoxal phosphate)lysine modification is found at lysine 34. Residue arginine 129 participates in substrate binding. Residue tyrosine 259 is the Proton acceptor; specific for L-alanine of the active site. Methionine 307 is a substrate binding site.

It belongs to the alanine racemase family. Requires pyridoxal 5'-phosphate as cofactor.

It carries out the reaction L-alanine = D-alanine. The protein operates within amino-acid biosynthesis; D-alanine biosynthesis; D-alanine from L-alanine: step 1/1. Functionally, catalyzes the interconversion of L-alanine and D-alanine. May also act on other amino acids. The protein is Alanine racemase (alr) of Coxiella burnetii (strain CbuK_Q154) (Coxiella burnetii (strain Q154)).